The following is a 286-amino-acid chain: Divergent deoxyribose-phosphate aldolase-like protein (286 aa).

In terms of assembly, homodimer. Interacts with ADF; the interaction enhances ADF activity in disassembly of filamentous actin and inhibition of actin polymerization.

It localises to the cytoplasm. Functionally, involved in regulation of actin dynamics. This Toxoplasma gondii protein is Divergent deoxyribose-phosphate aldolase-like protein.